A 350-amino-acid chain; its full sequence is Casein kinase II subunit alpha' (350 aa).

The 286-residue stretch at 40 to 325 folds into the Protein kinase domain; the sequence is YQLVRKLGRG…AKEAMEHPYF (286 aa). Residues 46–54 and lysine 69 each bind ATP; that span reads LGRGKYSEV. The active-site Proton acceptor is the aspartate 157.

Belongs to the protein kinase superfamily. Ser/Thr protein kinase family. CK2 subfamily. In terms of assembly, tetramer composed of an alpha chain, an alpha' and two beta chains.

It catalyses the reaction L-seryl-[protein] + ATP = O-phospho-L-seryl-[protein] + ADP + H(+). The enzyme catalyses L-threonyl-[protein] + ATP = O-phospho-L-threonyl-[protein] + ADP + H(+). In terms of biological role, casein kinases are operationally defined by their preferential utilization of acidic proteins such as caseins as substrates. The alpha and alpha' chains contain the catalytic site. Participates in Wnt signaling. The chain is Casein kinase II subunit alpha' from Gallus gallus (Chicken).